The chain runs to 175 residues: MTAILVTGYKSFELGLFSDKDPRIKVIKAAIQKDMVKMIEEGVDWFILTGNLGFEYWALEVLKDLKKAYPISVATIFAFENHGENWNESNLEKLAAFKTVDFVKYSYPQYENPSQFKSYHEFLMANTEGAYLFYDSENETNLKYLVMKMKELPQYRIHYLTFDRLNEIYEEGNDF.

The protein belongs to the UPF0398 family.

This is UPF0398 protein SUB1405 from Streptococcus uberis (strain ATCC BAA-854 / 0140J).